The sequence spans 122 residues: Small ribosomal subunit protein uS13 (122 aa).

Positions 92-122 (HRMGLPVRGQRTKTNARTRKGPSKPVSGKKK) are disordered. Basic residues predominate over residues 101 to 122 (QRTKTNARTRKGPSKPVSGKKK).

It belongs to the universal ribosomal protein uS13 family. In terms of assembly, part of the 30S ribosomal subunit. Forms a loose heterodimer with protein S19. Forms two bridges to the 50S subunit in the 70S ribosome.

Functionally, located at the top of the head of the 30S subunit, it contacts several helices of the 16S rRNA. In the 70S ribosome it contacts the 23S rRNA (bridge B1a) and protein L5 of the 50S subunit (bridge B1b), connecting the 2 subunits; these bridges are implicated in subunit movement. Contacts the tRNAs in the A and P-sites. The protein is Small ribosomal subunit protein uS13 of Ruminiclostridium cellulolyticum (strain ATCC 35319 / DSM 5812 / JCM 6584 / H10) (Clostridium cellulolyticum).